Reading from the N-terminus, the 1104-residue chain is Translation initiation factor IF-2 (1104 aa).

Disordered stretches follow at residues 51–444 (SLLG…LAAQ) and 461–497 (LARPAKPKSQQRTAPKPVAAMRKRKKETARQRQRRRA). Composition is skewed to low complexity over residues 60-119 (AKPA…KPQA) and 127-164 (ATPKPVISKPAPALVKAAAAPARPTAAKPVPRPAAAKP). Pro residues predominate over residues 189 to 202 (APTPRPTPARPTPR). 4 stretches are compositionally biased toward low complexity: residues 203 to 215 (PAGAGSPARPTPG), 227 to 246 (GAPSRPGAPTRAGAPAKPGA), 311 to 336 (STTGSGRPGAPTRPGAPGRPGMPAGM), and 366 to 396 (PTKAGAGAGTATPPVARPNSPSAPRRPSFRP). Positions 406-420 (GRPDWDDSARLDALR) are enriched in basic and acidic residues. The span at 481 to 495 (MRKRKKETARQRQRR) shows a compositional bias: basic residues. Residues 596–768 (RRPPVVTVMG…LLLVTEVEDL (173 aa)) form the tr-type G domain. The tract at residues 605 to 612 (GHVDHGKT) is G1. 605–612 (GHVDHGKT) serves as a coordination point for GTP. Residues 630–634 (GITQH) form a G2 region. Residues 655–658 (DTPG) are G3. GTP is bound by residues 655–659 (DTPGH) and 709–712 (NKID). A G4 region spans residues 709–712 (NKID). Residues 745-747 (SAI) form a G5 region.

Belongs to the TRAFAC class translation factor GTPase superfamily. Classic translation factor GTPase family. IF-2 subfamily.

It localises to the cytoplasm. In terms of biological role, one of the essential components for the initiation of protein synthesis. Protects formylmethionyl-tRNA from spontaneous hydrolysis and promotes its binding to the 30S ribosomal subunits. Also involved in the hydrolysis of GTP during the formation of the 70S ribosomal complex. This Synechococcus sp. (strain CC9605) protein is Translation initiation factor IF-2.